Consider the following 326-residue polypeptide: Vitamin B12 import system permease protein BtuC (326 aa).

The next 9 helical transmembrane spans lie at 15-35, 61-81, 88-108, 112-132, 146-166, 184-204, 240-260, 274-294, and 302-322; these read WLLC…CAGE, LAVL…QALF, PGLL…VLLG, LPNW…TLIL, LLAG…AIYF, GGVD…LLWI, GWMV…GLVI, VLLP…DIVA, and ELPI…WLLL.

It belongs to the binding-protein-dependent transport system permease family. FecCD subfamily. As to quaternary structure, the complex is composed of two ATP-binding proteins (BtuD), two transmembrane proteins (BtuC) and a solute-binding protein (BtuF).

It localises to the cell inner membrane. Its function is as follows. Part of the ABC transporter complex BtuCDF involved in vitamin B12 import. Involved in the translocation of the substrate across the membrane. In Escherichia coli O9:H4 (strain HS), this protein is Vitamin B12 import system permease protein BtuC.